A 206-amino-acid chain; its full sequence is Ribosomal RNA small subunit methyltransferase G (206 aa).

S-adenosyl-L-methionine-binding positions include Gly73, Leu78, Val124–Glu125, and Arg139.

The protein belongs to the methyltransferase superfamily. RNA methyltransferase RsmG family.

The protein resides in the cytoplasm. The catalysed reaction is guanosine(527) in 16S rRNA + S-adenosyl-L-methionine = N(7)-methylguanosine(527) in 16S rRNA + S-adenosyl-L-homocysteine. In terms of biological role, specifically methylates the N7 position of guanine in position 527 of 16S rRNA. This is Ribosomal RNA small subunit methyltransferase G from Photorhabdus laumondii subsp. laumondii (strain DSM 15139 / CIP 105565 / TT01) (Photorhabdus luminescens subsp. laumondii).